Consider the following 439-residue polypeptide: ATP-dependent RNA helicase SrmB (439 aa).

The short motif at 4–32 (SQFEQFDLSPELLKALEKKGYSRPTAIQM) is the Q motif element. A Helicase ATP-binding domain is found at 35–209 (IPAAMEESDV…AERLLNDPVK (175 aa)). 48-55 (APTGTGKT) contributes to the ATP binding site. Residues 157-160 (DEAD) carry the DEAD box motif. The region spanning 237 to 387 (KLLARFIETE…GLEPRTKPPK (151 aa)) is the Helicase C-terminal domain. Over residues 381–393 (PRTKPPKDGEVKS) the composition is skewed to basic and acidic residues. The interval 381–439 (PRTKPPKDGEVKSVSKKQKARIKEKREEKKKTEAKKKVKLRHKDTKNIGKRRKPSNSNV) is disordered. 2 stretches are compositionally biased toward basic residues: residues 394–403 (VSKKQKARIK) and 412–439 (TEAK…NSNV).

Belongs to the DEAD box helicase family. SrmB subfamily. As to quaternary structure, interacts with the 50S ribosomal subunit.

The protein resides in the cytoplasm. It catalyses the reaction ATP + H2O = ADP + phosphate + H(+). In terms of biological role, DEAD-box RNA helicase involved in the assembly of the 50S ribosomal subunit at low temperature. Exhibits RNA-stimulated ATP hydrolysis and RNA unwinding activity. This chain is ATP-dependent RNA helicase SrmB, found in Haemophilus influenzae (strain ATCC 51907 / DSM 11121 / KW20 / Rd).